An 891-amino-acid polypeptide reads, in one-letter code: DNA mismatch repair protein MutS (891 aa).

634 to 641 (GPNMGGKS) lines the ATP pocket.

This sequence belongs to the DNA mismatch repair MutS family.

This protein is involved in the repair of mismatches in DNA. It is possible that it carries out the mismatch recognition step. This protein has a weak ATPase activity. In Burkholderia mallei (strain NCTC 10247), this protein is DNA mismatch repair protein MutS.